The chain runs to 122 residues: Large ribosomal subunit protein uL18 (122 aa).

The protein belongs to the universal ribosomal protein uL18 family. Part of the 50S ribosomal subunit; part of the 5S rRNA/L5/L18/L25 subcomplex. Contacts the 5S and 23S rRNAs.

Its function is as follows. This is one of the proteins that bind and probably mediate the attachment of the 5S RNA into the large ribosomal subunit, where it forms part of the central protuberance. This is Large ribosomal subunit protein uL18 from Fervidobacterium nodosum (strain ATCC 35602 / DSM 5306 / Rt17-B1).